The following is a 258-amino-acid chain: Ribosomal RNA small subunit methyltransferase J (258 aa).

Residues 123 to 124 (ER) and aspartate 177 contribute to the S-adenosyl-L-methionine site. The interval 232-258 (IDGPKPSHSLEGKSSRYDIYPKKALKA) is disordered. A compositionally biased stretch (basic and acidic residues) spans 239 to 252 (HSLEGKSSRYDIYP).

Belongs to the methyltransferase superfamily. RsmJ family.

The protein resides in the cytoplasm. The catalysed reaction is guanosine(1516) in 16S rRNA + S-adenosyl-L-methionine = N(2)-methylguanosine(1516) in 16S rRNA + S-adenosyl-L-homocysteine + H(+). Its function is as follows. Specifically methylates the guanosine in position 1516 of 16S rRNA. The sequence is that of Ribosomal RNA small subunit methyltransferase J from Pseudomonas putida (strain W619).